The sequence spans 60 residues: UPF0509 protein ESA_01586 (60 aa).

It belongs to the UPF0509 family.

This chain is UPF0509 protein ESA_01586, found in Cronobacter sakazakii (strain ATCC BAA-894) (Enterobacter sakazakii).